A 438-amino-acid chain; its full sequence is Shikimate transporter (438 aa).

The next 12 helical transmembrane spans lie at 28–48 (FAGA…AALV), 64–84 (LAAF…GVIF), 109–129 (ALIG…ILLV), 133–153 (AIQG…SVES), 168–188 (VGYG…SMMT), 193–213 (FLSW…LGAL), 255–275 (IIAL…FALN), 287–307 (LFLN…PCFA), 318–337 (VYIT…FMAL), 341–363 (SIFW…VVCV), 387–407 (VASV…ITYF), and 411–431 (WHSV…TALL).

The protein belongs to the major facilitator superfamily. Metabolite:H+ Symporter (MHS) family (TC 2.A.1.6) family.

It is found in the cell inner membrane. It catalyses the reaction shikimate(in) + H(+)(in) = shikimate(out) + H(+)(out). Its function is as follows. Involved in the uptake of shikimate, an intermediate in the aromatic amino acid biosynthetic pathway. The chain is Shikimate transporter from Escherichia coli (strain K12).